Reading from the N-terminus, the 519-residue chain is Na(+)/H(+) exchange regulatory cofactor NHE-RF3 (519 aa).

The PDZ 1 domain maps to 9-90 (ECKLSKQEGQ…SVTLLVLDGD (82 aa)). Residues Ser-108, Ser-148, Ser-192, Ser-250, Ser-334, and Ser-348 each carry the phosphoserine modification. 2 consecutive PDZ domains span residues 134–215 (RLCY…VDKE) and 243–323 (IVEM…VDKE). A disordered region spans residues 347–374 (GSVKEAPAPTPTSLEVSSPPDTTEEVDH). Polar residues predominate over residues 357–367 (PTSLEVSSPPD). The PDZ 4 domain occupies 378 to 458 (LCRLAKGENG…NVTLLVCGKK (81 aa)). Thr-451 is modified (phosphothreonine). The segment at 479 to 519 (DTPPDSKEGIVVESNHDSHMAKERAHSTASHSSSNSEDTEM) is disordered. A compositionally biased stretch (basic and acidic residues) spans 482–504 (PDSKEGIVVESNHDSHMAKERAH). A phosphoserine mark is found at Ser-492, Ser-508, Ser-510, Ser-511, Ser-512, and Ser-514. Over residues 505–519 (STASHSSSNSEDTEM) the composition is skewed to low complexity.

This sequence belongs to the NHER family. Interacts with PDZK1IP1 and ABCC2. Interacts (via PDZ domains 1 and 3) with SCARB1 (C-terminal domain). Forms a heterodimeric complex with NHERF1. Interacts with AKAP2, BCR, CFTR, SLC22A12, SLC22A4, SLC22A5, NHERF2 and SLC17A1. Component of a complex, composed of PDZK1, SYNGAP1, KLHL17 and NMDA receptors. Interacts (via PDZ1 domain) directly with KLHL17; the interaction is important for integrity of actin cytoskeleton structures in neurons. Interacts (via the first PDZ domain) with PTGIR (via non-isoprenylated C-terminus). Interacts (via C-terminal PDZ domain) with SLC26A6 (via C-terminal domain). Interacts (via C-terminal PDZ domain) with SLC9A3 (via C-terminal domain). Interacts (via PDZ domains 1 and 3) with SLC5A8 (via PDZ-binding motif); interaction increases nicotinate transport activity of SLC5A8. As to expression, expression is limited to epithelial cells. Expressed in the kidney (brush border of proximal tubule), pancreas, liver, and small intestine. Expressed at a lower level in the adrenal cortex, testis and stomach. Overexpressed in breast, renal and lung carcinomas.

The protein localises to the membrane. It localises to the cell membrane. In terms of biological role, a scaffold protein that connects plasma membrane proteins and regulatory components, regulating their surface expression in epithelial cells apical domains. May be involved in the coordination of a diverse range of regulatory processes for ion transport and second messenger cascades. In complex with NHERF1, may cluster proteins that are functionally dependent in a mutual fashion and modulate the trafficking and the activity of the associated membrane proteins. May play a role in the cellular mechanisms associated with multidrug resistance through its interaction with ABCC2 and PDZK1IP1. May potentiate the CFTR chloride channel activity. Required for normal cell-surface expression of SCARB1. Plays a role in maintaining normal plasma cholesterol levels via its effects on SCARB1. Plays a role in the normal localization and function of the chloride-anion exchanger SLC26A6 to the plasma membrane in the brush border of the proximal tubule of the kidney. May be involved in the regulation of proximal tubular Na(+)-dependent inorganic phosphate cotransport therefore playing an important role in tubule function. In Homo sapiens (Human), this protein is Na(+)/H(+) exchange regulatory cofactor NHE-RF3 (PDZK1).